The chain runs to 478 residues: Bifunctional protein HldE (478 aa).

The interval 1–318 (MKVTLPDFRQ…ENAIRGRADT (318 aa)) is ribokinase. An ATP-binding site is contributed by 195 to 198 (NLSE). Residue aspartate 264 is part of the active site. The interval 344-478 (MTNGCFDILH…NTIKANASKS (135 aa)) is cytidylyltransferase.

It in the N-terminal section; belongs to the carbohydrate kinase PfkB family. This sequence in the C-terminal section; belongs to the cytidylyltransferase family. In terms of assembly, homodimer.

The enzyme catalyses D-glycero-beta-D-manno-heptose 7-phosphate + ATP = D-glycero-beta-D-manno-heptose 1,7-bisphosphate + ADP + H(+). The catalysed reaction is D-glycero-beta-D-manno-heptose 1-phosphate + ATP + H(+) = ADP-D-glycero-beta-D-manno-heptose + diphosphate. Its pathway is nucleotide-sugar biosynthesis; ADP-L-glycero-beta-D-manno-heptose biosynthesis; ADP-L-glycero-beta-D-manno-heptose from D-glycero-beta-D-manno-heptose 7-phosphate: step 1/4. It functions in the pathway nucleotide-sugar biosynthesis; ADP-L-glycero-beta-D-manno-heptose biosynthesis; ADP-L-glycero-beta-D-manno-heptose from D-glycero-beta-D-manno-heptose 7-phosphate: step 3/4. Its function is as follows. Catalyzes the phosphorylation of D-glycero-D-manno-heptose 7-phosphate at the C-1 position to selectively form D-glycero-beta-D-manno-heptose-1,7-bisphosphate. Catalyzes the ADP transfer from ATP to D-glycero-beta-D-manno-heptose 1-phosphate, yielding ADP-D-glycero-beta-D-manno-heptose. The polypeptide is Bifunctional protein HldE (Pectobacterium carotovorum subsp. carotovorum (strain PC1)).